The sequence spans 204 residues: Ribonuclease HII (204 aa).

Residues 1–197 (MILGIDEAGR…KNRILNPKLL (197 aa)) enclose the RNase H type-2 domain. Residues D6, E7, and D103 each coordinate a divalent metal cation.

Belongs to the RNase HII family. Mn(2+) is required as a cofactor. It depends on Mg(2+) as a cofactor.

It is found in the cytoplasm. The enzyme catalyses Endonucleolytic cleavage to 5'-phosphomonoester.. Functionally, endonuclease that specifically degrades the RNA of RNA-DNA hybrids. The chain is Ribonuclease HII from Helicobacter pylori (strain G27).